The chain runs to 161 residues: Small ribosomal subunit protein bS16 (161 aa).

Residues 114-161 (EGGPTTEATKPKKKSPAKKAKGGEGDADAAAEKVEASAEGEQTESAES) are disordered. Basic residues predominate over residues 124-133 (PKKKSPAKKA).

The protein belongs to the bacterial ribosomal protein bS16 family.

The protein is Small ribosomal subunit protein bS16 of Mycobacterium marinum (strain ATCC BAA-535 / M).